We begin with the raw amino-acid sequence, 357 residues long: D-amino-acid oxidase (357 aa).

FAD contacts are provided by Ala13, Gly14, Ser42, Gly47, Arg289, Gly315, and Gly318. Arg289 lines the D-proline pocket. D-serine is bound at residue Arg289.

This sequence belongs to the DAMOX/DASOX family. Requires FAD as cofactor.

The protein localises to the cytoplasm. It is found in the secreted. Its subcellular location is the cell wall. It carries out the reaction a D-alpha-amino acid + O2 + H2O = a 2-oxocarboxylate + H2O2 + NH4(+). It catalyses the reaction D-phenylalanine + O2 + H2O = 3-phenylpyruvate + H2O2 + NH4(+). The enzyme catalyses D-lysine + O2 + H2O = 6-amino-2-oxohexanoate + H2O2 + NH4(+). The catalysed reaction is D-methionine + O2 + H2O = 4-methylsulfanyl-2-oxobutanoate + H2O2 + NH4(+). It carries out the reaction D-arginine + O2 + H2O = 5-guanidino-2-oxopentanoate + H2O2 + NH4(+). It catalyses the reaction D-ornithine + O2 + H2O = 5-amino-2-oxopentanoate + H2O2 + NH4(+). The enzyme catalyses D-leucine + O2 + H2O = 4-methyl-2-oxopentanoate + H2O2 + NH4(+). The catalysed reaction is D-histidine + O2 + H2O = 3-(imidazol-5-yl)pyruvate + H2O2 + NH4(+). Its activity is regulated as follows. Activated by manganese, copper, and iron ions. Inhibited by barium, aluminum, and zinc ions. Catalyzes the oxidative deamination of D-amino acids with broad substrate specificity. In Unknown prokaryotic organism, this protein is D-amino-acid oxidase.